The primary structure comprises 222 residues: Small ribosomal subunit protein uS5 (222 aa).

A disordered region spans residues 1 to 41 (MAEQAGAGSAQDNRGGGRDDRGGRGRRDDRGGRGGRDDREK). Positions 15-41 (GGGRDDRGGRGRRDDRGGRGGRDDREK) are enriched in basic and acidic residues. One can recognise an S5 DRBM domain in the interval 44–107 (YLERVVTINR…EEARKNFFRV (64 aa)).

It belongs to the universal ribosomal protein uS5 family. As to quaternary structure, part of the 30S ribosomal subunit. Contacts proteins S4 and S8.

In terms of biological role, with S4 and S12 plays an important role in translational accuracy. Functionally, located at the back of the 30S subunit body where it stabilizes the conformation of the head with respect to the body. This is Small ribosomal subunit protein uS5 from Mycolicibacterium gilvum (strain PYR-GCK) (Mycobacterium gilvum (strain PYR-GCK)).